A 187-amino-acid chain; its full sequence is UPF0200 protein MA_4660 (187 aa).

9 to 16 (GMPASGKS) is a binding site for ATP.

This sequence belongs to the UPF0200 family.

In Methanosarcina acetivorans (strain ATCC 35395 / DSM 2834 / JCM 12185 / C2A), this protein is UPF0200 protein MA_4660.